Reading from the N-terminus, the 427-residue chain is Enolase (427 aa).

Residue Q163 coordinates (2R)-2-phosphoglycerate. The active-site Proton donor is the E205. Mg(2+)-binding residues include D242, E285, and D312. Residues K337, R366, S367, and K388 each contribute to the (2R)-2-phosphoglycerate site. K337 (proton acceptor) is an active-site residue.

Belongs to the enolase family. The cofactor is Mg(2+).

Its subcellular location is the cytoplasm. It localises to the secreted. The protein localises to the cell surface. The catalysed reaction is (2R)-2-phosphoglycerate = phosphoenolpyruvate + H2O. It participates in carbohydrate degradation; glycolysis; pyruvate from D-glyceraldehyde 3-phosphate: step 4/5. In terms of biological role, catalyzes the reversible conversion of 2-phosphoglycerate (2-PG) into phosphoenolpyruvate (PEP). It is essential for the degradation of carbohydrates via glycolysis. This Beijerinckia indica subsp. indica (strain ATCC 9039 / DSM 1715 / NCIMB 8712) protein is Enolase.